Reading from the N-terminus, the 86-residue chain is Large ribosomal subunit protein bL31B (86 aa).

Belongs to the bacterial ribosomal protein bL31 family. Type B subfamily. In terms of assembly, part of the 50S ribosomal subunit.

The chain is Large ribosomal subunit protein bL31B from Salmonella paratyphi A (strain ATCC 9150 / SARB42).